Reading from the N-terminus, the 155-residue chain is Small ribosomal subunit protein uS7 (155 aa).

This sequence belongs to the universal ribosomal protein uS7 family. Part of the 30S ribosomal subunit. Contacts proteins S9 and S11.

Functionally, one of the primary rRNA binding proteins, it binds directly to 16S rRNA where it nucleates assembly of the head domain of the 30S subunit. Is located at the subunit interface close to the decoding center, probably blocks exit of the E-site tRNA. This is Small ribosomal subunit protein uS7 from Prosthecochloris aestuarii (strain DSM 271 / SK 413).